Reading from the N-terminus, the 1032-residue chain is Suppression of tumorigenicity 18 protein (1032 aa).

3 disordered regions span residues 29–76 (RAEE…TNDH), 162–213 (GRDK…LTYN), and 325–354 (RQPKVTDASGRQIFNNKHSPRPERREAKCP). Over residues 40–51 (NKRKSLLMKPRH) the composition is skewed to basic residues. A compositionally biased stretch (basic and acidic residues) spans 52–76 (YSPDMDCKENPDNRNEDDGLETNDH). 6 consecutive CCHHC-type zinc fingers follow at residues 344–387 (PRPE…PLEI), 388–431 (LAMH…KLAM), 700–743 (RDLK…LKSL), 744–787 (MAAN…GIKM), 792–835 (EEKE…QKEN), and 845–888 (KLNK…IKKV). Zn(2+) is bound by residues C353, C358, H371, C377, C397, C402, H415, C421, C709, C714, H727, C733, C753, C758, H771, C777, C801, C806, H819, C825, C854, C859, H872, and C878. The stretch at 905 to 974 (IEGDEEIRHL…KELAGLSQAL (70 aa)) forms a coiled coil.

It belongs to the MYT1 family. Detected in brain.

It is found in the nucleus. Repressor that binds to DNA sequences containing a bipartite element consisting of a direct repeat of the sequence 5'-AAAGTTT-3' separated by 2-9 nucleotides. Represses basal transcription activity from target promoters. In Rattus norvegicus (Rat), this protein is Suppression of tumorigenicity 18 protein (St18).